The sequence spans 964 residues: DNA mismatch repair protein MSH2 (964 aa).

Residue 688-695 coordinates ATP; that stretch reads GPNMGGKS. The segment at 851–964 is interaction with MSH6; that stretch reads DQSFGIHVAE…YLKYIKALLL (114 aa).

The protein belongs to the DNA mismatch repair MutS family. As to quaternary structure, heterodimer consisting of MSH2-MSH6 (MutS alpha) or MSH2-MSH3 (MutS beta). Both heterodimers form a ternary complex with MutL alpha (MLH1-PMS1). MutS beta also forms a ternary complex with MutL beta (MLH1-MLH3), and possibly with a MLH1-MLH2 heterodimer. Both heterodimers interact with proliferating cell nuclear antigen (PCNA/POL30). This interaction is disrupted upon binding of the MutS heterodimers to mismatch DNA. Interacts with SAW1.

It localises to the nucleus. Inhibited by Cd(2+). In terms of biological role, component of the post-replicative DNA mismatch repair system (MMR). Forms two different heterodimers: MutS alpha (MSH2-MSH6 heterodimer) and MutS beta (MSH2-MSH3 heterodimer), which bind to DNA mismatches thereby initiating DNA repair. MSH2 seems to act as a scaffold for the other MutS homologs that provide substrate-binding and substrate specificity. When bound, heterodimers bend the DNA helix and shield approximately 20 base pairs. MutS alpha acts mainly to repair base-base and single insertion-deletion mismatches that occur during replication, but can also repair longer insertion-deletion loops (IDLs), although with decreasing efficiency as the size of the extrahelical loop increases. MutS beta acts mainly to repair IDLs from 2 to 13 nucleotides in size, but can also repair base-base and single insertion-deletion mismatches. After mismatch binding, MutS alpha or beta form a ternary complex with a MutL heterodimer, which is thought to be responsible for directing the downstream MMR events, including strand discrimination, excision, and resynthesis. ATP binding and hydrolysis play a pivotal role in mismatch repair functions. Both subunits bind ATP, but with differing affinities, and their ATPase kinetics are also very different. MSH6 binds and hydrolyzes ATP rapidly, whereas MSH2 catalyzes ATP at a substantially slower rate. Binding to a mismatched base pair suppresses MSH6-catalyzed ATP hydrolysis, but not the activity of MSH2. ATP binding to both subunits is necessary to trigger a change in MutS alpha interaction with mismatched DNA, converting MutS alpha into a sliding clamp capable of hydrolysis-independent movement along DNA, and also facilitates formation of ternary complexes containing MutS and MutL proteins and the mismatch. MutS beta also has a role in regulation of heteroduplex formation during mitotic and meiotic recombination. MutS beta binds to DNA flap structures predicted to form during recombination, and is required for 3' non-homologous tail removal (NHTR). MutS beta-binding alters the DNA conformation of its substrate at the ds/ssDNA junction and may facilitate its recognition and/or cleavage by the downstream nucleotide excision repair (NER) RAD1-RAD10 endonuclease. In Saccharomyces cerevisiae (strain ATCC 204508 / S288c) (Baker's yeast), this protein is DNA mismatch repair protein MSH2 (MSH2).